The primary structure comprises 134 residues: ATP synthase epsilon chain (134 aa).

This sequence belongs to the ATPase epsilon chain family. As to quaternary structure, F-type ATPases have 2 components, CF(1) - the catalytic core - and CF(0) - the membrane proton channel. CF(1) has five subunits: alpha(3), beta(3), gamma(1), delta(1), epsilon(1). CF(0) has three main subunits: a, b and c.

It localises to the cell membrane. Its function is as follows. Produces ATP from ADP in the presence of a proton gradient across the membrane. The protein is ATP synthase epsilon chain of Pelotomaculum thermopropionicum (strain DSM 13744 / JCM 10971 / SI).